Here is a 337-residue protein sequence, read N- to C-terminus: Ornithine carbamoyltransferase (337 aa).

Carbamoyl phosphate is bound by residues 57-60 (STRT), Gln-84, Arg-108, and 135-138 (HPTQ). L-ornithine is bound by residues Asn-167, Asp-231, and 235–236 (SM). Residues 272 to 273 (CL) and Arg-317 each bind carbamoyl phosphate.

The protein belongs to the aspartate/ornithine carbamoyltransferase superfamily. OTCase family.

It is found in the cytoplasm. The catalysed reaction is carbamoyl phosphate + L-ornithine = L-citrulline + phosphate + H(+). It functions in the pathway amino-acid degradation; L-arginine degradation via ADI pathway; carbamoyl phosphate from L-arginine: step 2/2. Functionally, reversibly catalyzes the transfer of the carbamoyl group from carbamoyl phosphate (CP) to the N(epsilon) atom of ornithine (ORN) to produce L-citrulline. The protein is Ornithine carbamoyltransferase of Streptococcus equi subsp. equi (strain 4047).